The sequence spans 205 residues: Recombination protein RecR (205 aa).

The C4-type zinc finger occupies 58-75; that stretch reads CSVCQNVTDRDADPCYIC. A Toprim domain is found at 83-182; the sequence is SVICVVESPA…SVTKIARGIP (100 aa).

Belongs to the RecR family.

Functionally, may play a role in DNA repair. It seems to be involved in an RecBC-independent recombinational process of DNA repair. It may act with RecF and RecO. The protein is Recombination protein RecR of Chlorobium limicola (strain DSM 245 / NBRC 103803 / 6330).